A 402-amino-acid chain; its full sequence is Multidrug resistance protein MdtH (402 aa).

Topologically, residues 1–12 are cytoplasmic; that stretch reads MSRVSQARNLGK. A helical transmembrane segment spans residues 13 to 33; the sequence is YFLLIDNMLVVLGFFVVFPLI. At 34-98 the chain is on the periplasmic side; the sequence is SIRFIDQMGW…GFATMGIAHE (65 aa). A helical transmembrane segment spans residues 99–116; it reads PWLLWFSCFLSGLGGTLF. Topologically, residues 117–138 are cytoplasmic; sequence DPPRSALVVKLIRPEQRGRFFS. The helical transmembrane segment at 139–159 threads the bilayer; sequence LLMMQDSAGAVIGALLGSWLL. Over 160 to 164 the chain is Periplasmic; the sequence is QYDFR. Residues 165 to 185 traverse the membrane as a helical segment; the sequence is LVCATGAILFILCALFNAWLL. Residues 186 to 213 are Cytoplasmic-facing; sequence PAWKLSTVRTPVREGMRRVMSDKRFVTY. The chain crosses the membrane as a helical span at residues 214–234; that stretch reads VLTLAGYYMLAVQVMLMLPIM. Residues 235 to 243 lie on the Periplasmic side of the membrane; it reads VNDIAGSPA. The chain crosses the membrane as a helical span at residues 244–264; the sequence is AVKWMYAIEACLSLTLLYPIA. At 265–276 the chain is on the cytoplasmic side; sequence RWSEKRFRLEHR. Residues 277-297 form a helical membrane-spanning segment; it reads LMAGLLVMSLSMIPIGMVGNL. At 298 to 299 the chain is on the periplasmic side; it reads QQ. The chain crosses the membrane as a helical span at residues 300–320; sequence LFTLICAFYIGSVIAEPARET. Topologically, residues 321-339 are cytoplasmic; that stretch reads LSASLADARARGSYMGFSR. A helical membrane pass occupies residues 340–360; it reads LGLAIGGAIGYIGGGWLFDMG. At 361–367 the chain is on the periplasmic side; the sequence is KALTQPE. A helical membrane pass occupies residues 368-388; the sequence is LPWMMLGIIGFITFLALGWQF. Over 389–402 the chain is Cytoplasmic; the sequence is SHKRTPRRMLEPGA.

It belongs to the major facilitator superfamily. DHA1 family. MdtH (TC 2.A.1.2.21) subfamily.

It is found in the cell inner membrane. This chain is Multidrug resistance protein MdtH, found in Salmonella paratyphi C (strain RKS4594).